The chain runs to 396 residues: 1-deoxy-D-xylulose 5-phosphate reductoisomerase (396 aa).

6 residues coordinate NADPH: threonine 10, glycine 11, serine 12, isoleucine 13, asparagine 38, and asparagine 123. 1-deoxy-D-xylulose 5-phosphate is bound at residue lysine 124. Glutamate 125 contributes to the NADPH binding site. Aspartate 149 lines the Mn(2+) pocket. Residues serine 150, glutamate 151, serine 185, and histidine 208 each coordinate 1-deoxy-D-xylulose 5-phosphate. Residue glutamate 151 participates in Mn(2+) binding. NADPH is bound at residue glycine 214. 1-deoxy-D-xylulose 5-phosphate contacts are provided by serine 221, asparagine 226, lysine 227, and glutamate 230. Glutamate 230 lines the Mn(2+) pocket.

It belongs to the DXR family. Mg(2+) serves as cofactor. Mn(2+) is required as a cofactor.

It carries out the reaction 2-C-methyl-D-erythritol 4-phosphate + NADP(+) = 1-deoxy-D-xylulose 5-phosphate + NADPH + H(+). Its pathway is isoprenoid biosynthesis; isopentenyl diphosphate biosynthesis via DXP pathway; isopentenyl diphosphate from 1-deoxy-D-xylulose 5-phosphate: step 1/6. Catalyzes the NADPH-dependent rearrangement and reduction of 1-deoxy-D-xylulose-5-phosphate (DXP) to 2-C-methyl-D-erythritol 4-phosphate (MEP). This chain is 1-deoxy-D-xylulose 5-phosphate reductoisomerase, found in Shewanella piezotolerans (strain WP3 / JCM 13877).